The sequence spans 305 residues: Tyrosine recombinase XerC (305 aa).

One can recognise a Core-binding (CB) domain in the interval 1-93 (MVLDGFAAYF…AWRQYCAWLV (93 aa)). The Tyr recombinase domain maps to 114-294 (RVPKALPQEW…DFDHIARLYD (181 aa)). Active-site residues include R155, K179, H246, R249, and H272. Y281 acts as the O-(3'-phospho-DNA)-tyrosine intermediate in catalysis.

The protein belongs to the 'phage' integrase family. XerC subfamily. In terms of assembly, forms a cyclic heterotetrameric complex composed of two molecules of XerC and two molecules of XerD.

The protein localises to the cytoplasm. In terms of biological role, site-specific tyrosine recombinase, which acts by catalyzing the cutting and rejoining of the recombining DNA molecules. The XerC-XerD complex is essential to convert dimers of the bacterial chromosome into monomers to permit their segregation at cell division. It also contributes to the segregational stability of plasmids. This Neisseria gonorrhoeae (strain ATCC 700825 / FA 1090) protein is Tyrosine recombinase XerC.